Reading from the N-terminus, the 232-residue chain is Probable transcriptional regulatory protein Bd1964 (232 aa).

It belongs to the TACO1 family.

The protein resides in the cytoplasm. The protein is Probable transcriptional regulatory protein Bd1964 of Bdellovibrio bacteriovorus (strain ATCC 15356 / DSM 50701 / NCIMB 9529 / HD100).